The following is a 544-amino-acid chain: Chaperonin GroEL 1 (544 aa).

ATP is bound by residues Thr-29–Pro-32, Asp-86–Thr-90, Gly-413, Asn-479–Ala-481, and Asp-495. The segment at Pro-525–Tyr-544 is disordered. Over residues Ala-535 to Tyr-544 the composition is skewed to gly residues.

Belongs to the chaperonin (HSP60) family. As to quaternary structure, forms a cylinder of 14 subunits composed of two heptameric rings stacked back-to-back. Interacts with the co-chaperonin GroES.

The protein localises to the cytoplasm. The catalysed reaction is ATP + H2O + a folded polypeptide = ADP + phosphate + an unfolded polypeptide.. Functionally, together with its co-chaperonin GroES, plays an essential role in assisting protein folding. The GroEL-GroES system forms a nano-cage that allows encapsulation of the non-native substrate proteins and provides a physical environment optimized to promote and accelerate protein folding. The sequence is that of Chaperonin GroEL 1 from Nostoc sp. (strain PCC 7120 / SAG 25.82 / UTEX 2576).